An 845-amino-acid polypeptide reads, in one-letter code: Protein P (845 aa).

The tract at residues 1 to 179 (MPLSYQHFRK…FCGSPYSWEQ (179 aa)) is terminal protein domain (TP). The interval 180–348 (ELQHGRLVIK…YCLSHLVNLR (169 aa)) is spacer. Residues 226 to 252 (GLQPRQGRLASSQPSRSGSIRAKAHPS) are disordered. Positions 234-243 (LASSQPSRSG) are enriched in polar residues. Positions 349–692 (EDWGPCDEHG…YMNLYPVARQ (344 aa)) are polymerase/reverse transcriptase domain (RT). Positions 359-602 (EHHIRIPRTP…YSLNFMGYII (244 aa)) constitute a Reverse transcriptase domain. Mg(2+) is bound by residues aspartate 431, aspartate 553, and aspartate 554. Residues 693–845 (RPGLCQVFAD…SPLHVAWRPP (153 aa)) form a rnaseH domain (RH) region.

Belongs to the hepadnaviridae P protein family.

It carries out the reaction DNA(n) + a 2'-deoxyribonucleoside 5'-triphosphate = DNA(n+1) + diphosphate. The catalysed reaction is Endonucleolytic cleavage to 5'-phosphomonoester.. Activated by host HSP70 and HSP40 in vitro to be able to bind the epsilon loop of the pgRNA. Because deletion of the RNase H region renders the protein partly chaperone-independent, the chaperones may be needed indirectly to relieve occlusion of the RNA-binding site by this domain. Inhibited by several reverse-transcriptase inhibitors: Lamivudine, Adefovir and Entecavir. Multifunctional enzyme that converts the viral RNA genome into dsDNA in viral cytoplasmic capsids. This enzyme displays a DNA polymerase activity that can copy either DNA or RNA templates, and a ribonuclease H (RNase H) activity that cleaves the RNA strand of RNA-DNA heteroduplexes in a partially processive 3'- to 5'-endonucleasic mode. Neo-synthesized pregenomic RNA (pgRNA) are encapsidated together with the P protein, and reverse-transcribed inside the nucleocapsid. Initiation of reverse-transcription occurs first by binding the epsilon loop on the pgRNA genome, and is initiated by protein priming, thereby the 5'-end of (-)DNA is covalently linked to P protein. Partial (+)DNA is synthesized from the (-)DNA template and generates the relaxed circular DNA (RC-DNA) genome. After budding and infection, the RC-DNA migrates in the nucleus, and is converted into a plasmid-like covalently closed circular DNA (cccDNA). The activity of P protein does not seem to be necessary for cccDNA generation, and is presumably released from (+)DNA by host nuclear DNA repair machinery. This is Protein P from Homo sapiens (Human).